The following is a 623-amino-acid chain: Bifunctional methionine biosynthesis protein MetXA/MetW (623 aa).

A compositionally biased stretch (polar residues) spans Met1–Ser17. The segment at Met1–Asp30 is disordered. The AB hydrolase-1 domain maps to Asn77–Leu385. The active-site Nucleophile is Ser183. Arg253 lines the substrate pocket. Active-site residues include Asp348 and His381. Asp382 lines the substrate pocket. The interval Asn417 to His619 is metW.

It in the N-terminal section; belongs to the AB hydrolase superfamily. MetX family. The protein in the C-terminal section; belongs to the MetW family. Homodimer.

The protein localises to the cytoplasm. It catalyses the reaction L-homoserine + acetyl-CoA = O-acetyl-L-homoserine + CoA. The protein operates within amino-acid biosynthesis; L-methionine biosynthesis via de novo pathway; O-acetyl-L-homoserine from L-homoserine: step 1/1. Its function is as follows. Transfers an acetyl group from acetyl-CoA to L-homoserine, forming acetyl-L-homoserine. This Rhodopirellula baltica (strain DSM 10527 / NCIMB 13988 / SH1) protein is Bifunctional methionine biosynthesis protein MetXA/MetW.